The primary structure comprises 880 residues: Zinc-responsive transcriptional regulator ZAP1 (880 aa).

2 disordered regions span residues 1 to 26 (MDAL…AASA) and 140 to 164 (NNFH…PRRK). Over residues 17–26 (ATSAATAASA) the composition is skewed to low complexity. Polar residues predominate over residues 147 to 158 (SDPTSPQQNSKS). Phosphoserine is present on residues Ser-156 and Ser-166. A zinc-responsive domain 1 (ZRD(AD1)) region spans residues 182–502 (KPNPPPGSDD…LTNNDLNDLI (321 aa)). A transcription activation domain 1 (AD1) region spans residues 207–402 (HPKSEANIKQ…YEVPFGKHIN (196 aa)). Disordered stretches follow at residues 436–482 (NRCN…VNNS) and 510–555 (RFRN…PSSI). The segment covering 442 to 456 (NNLNGSNNNTAGATS) has biased composition (low complexity). Residues 460-474 (QHHHHRIQFHSHKPN) are compositionally biased toward basic residues. Ser-515 carries the phosphoserine modification. Residues 545 to 555 (SSLEDSLPSSI) are compositionally biased toward low complexity. A C2H2-type 1 zinc finger spans residues 579-604 (LKCKWKECPESCSSLFDLQRHLLKDH). The interval 579 to 641 (LKCKWKECPE…SIVNHINCQH (63 aa)) is zinc-responsive domain 2 (ZRD(AD2)). Residues Cys-581, Cys-586, His-599, His-604, Cys-618, Cys-623, His-636, and His-641 each coordinate Zn(2+). The tract at residues 611 to 640 (HPMEPLACNWEDCDFLGDDTCSIVNHINCQ) is transcription activation domain 2 (AD2). Residues 616 to 641 (LACNWEDCDFLGDDTCSIVNHINCQH) form a C2H2-type 2; atypical zinc finger. 5 C2H2-type zinc fingers span residues 705–730 (VICQ…EAVH), 738–762 (YQCL…LKVH), 768–790 (YKCK…TRTH), 796–818 (YKCH…IRTH), and 824–846 (LQCK…IKTH). The segment at residues 705 to 846 (VICQWDGCNK…SNLSKHIKTH (142 aa)) is a DNA-binding region (DNA-binding domain).

It localises to the nucleus. Its activity is regulated as follows. Active in zinc-limited cells and repressed in replete cells. Zinc controls ZAP1 DNA binding activity. Transcription regulator controlling zinc-responsive gene expression. Binds to zinc-responsive elements (ZREs) (consensus sequence 5'-ACCYYNAAGGT-3') in the promoter of target genes. Recruits SWI/SNF, SAGA, and Mediator complexes as coactivators in a zinc-responsive manner. Involved in zinc ion homeostasis by zinc-responsive transcriptional regulation of the zinc uptake system genes ZTR1 and ZTR2. Positively regulates ETR1 expression, affecting mitochondrial function. This chain is Zinc-responsive transcriptional regulator ZAP1 (ZAP1), found in Saccharomyces cerevisiae (strain ATCC 204508 / S288c) (Baker's yeast).